The primary structure comprises 89 residues: MALTAEEKQEIIKTYATHEGDTGSPEVQVALLTKRIADLTEHLKEHKHDHHSRRGLLLMVGDRRRMLDYLKRVDINRYRSLIERLGLRR.

Belongs to the universal ribosomal protein uS15 family. As to quaternary structure, part of the 30S ribosomal subunit. Forms a bridge to the 50S subunit in the 70S ribosome, contacting the 23S rRNA.

Its function is as follows. One of the primary rRNA binding proteins, it binds directly to 16S rRNA where it helps nucleate assembly of the platform of the 30S subunit by binding and bridging several RNA helices of the 16S rRNA. In terms of biological role, forms an intersubunit bridge (bridge B4) with the 23S rRNA of the 50S subunit in the ribosome. In Bifidobacterium adolescentis (strain ATCC 15703 / DSM 20083 / NCTC 11814 / E194a), this protein is Small ribosomal subunit protein uS15.